A 118-amino-acid chain; its full sequence is Secreted effector CSEP0064 (118 aa).

The first 21 residues, 1-21 (MRPFQLLSALAIFINLEAVEA), serve as a signal peptide directing secretion. Residues cysteine 27 and cysteine 113 are joined by a disulfide bond.

Interacts in planta with the pathogenesis-related protein PR10.

The protein localises to the secreted. The protein resides in the host cell. Secreted effector that increases susceptibility to infection in both monocotyledonous and dicotyledonous plants. Non-catalytic homolog of fungal RNases that binds host RNA and inhibits the degradation of host ribosomal RNA induced by ribosome-inactivating proteins (RIPs), preventing host cell death, an inviable interaction and demise of the fungus. The polypeptide is Secreted effector CSEP0064 (Blumeria graminis f. sp. hordei (strain DH14) (Barley powdery mildew)).